The chain runs to 707 residues: Protein SGM1 (707 aa).

The segment covering 1–11 (MSKKLSLEERL) has biased composition (basic and acidic residues). The tract at residues 1 to 52 (MSKKLSLEERLSLATKKGRKKNKRSTSNLSSPSPVVLSNNEQESARTSIDDA) is disordered. Ser-2 is modified (N-acetylserine). Low complexity predominate over residues 27-40 (SNLSSPSPVVLSNN). Positions 122–473 (VEELVKEISP…KPHQENSNEK (352 aa)) form a coiled coil. Residues Ser-151, Ser-538, Ser-549, Ser-568, Ser-571, Ser-576, and Ser-589 each carry the phosphoserine modification. Positions 594-706 (SAHLVNKLST…QQMVEMQGKM (113 aa)) form a coiled coil.

Belongs to the SGM1 family. In terms of assembly, interacts with YPT6.

It localises to the golgi apparatus. In terms of biological role, required for normal growth rate on galactose and mannose. This is Protein SGM1 (SGM1) from Saccharomyces cerevisiae (strain ATCC 204508 / S288c) (Baker's yeast).